The chain runs to 206 residues: Bacteriochlorophyll synthase 23 kDa chain (206 aa).

It functions in the pathway porphyrin-containing compound metabolism; bacteriochlorophyll biosynthesis (light-independent). The protein is Bacteriochlorophyll synthase 23 kDa chain (bchJ) of Cereibacter sphaeroides (strain ATCC 17023 / DSM 158 / JCM 6121 / CCUG 31486 / LMG 2827 / NBRC 12203 / NCIMB 8253 / ATH 2.4.1.) (Rhodobacter sphaeroides).